Reading from the N-terminus, the 269-residue chain is Shikimate dehydrogenase (NADP(+)) (269 aa).

Shikimate-binding positions include 17–19 (SKS) and Thr64. Catalysis depends on Lys68, which acts as the Proton acceptor. Glu80 contributes to the NADP(+) binding site. Residues Asn89 and Asp105 each contribute to the shikimate site. Residues 130 to 134 (GAGGA), 154 to 159 (NRTHAK), and Met213 each bind NADP(+). Tyr215 serves as a coordination point for shikimate. Gly237 serves as a coordination point for NADP(+).

This sequence belongs to the shikimate dehydrogenase family. As to quaternary structure, homodimer.

The catalysed reaction is shikimate + NADP(+) = 3-dehydroshikimate + NADPH + H(+). Its pathway is metabolic intermediate biosynthesis; chorismate biosynthesis; chorismate from D-erythrose 4-phosphate and phosphoenolpyruvate: step 4/7. In terms of biological role, involved in the biosynthesis of the chorismate, which leads to the biosynthesis of aromatic amino acids. Catalyzes the reversible NADPH linked reduction of 3-dehydroshikimate (DHSA) to yield shikimate (SA). This Neisseria cinerea protein is Shikimate dehydrogenase (NADP(+)).